Reading from the N-terminus, the 68-residue chain is Conotoxin mr3g (68 aa).

An N-terminal signal peptide occupies residues 1 to 19; it reads MSKLGVLLTICLLLFALTA. A propeptide spanning residues 20-51 is cleaved from the precursor; it reads VPLDGDQPADRPAERMQDDISSERHPMFDAVR. 3 cysteine pairs are disulfide-bonded: cysteine 53-cysteine 67, cysteine 54-cysteine 63, and cysteine 59-cysteine 66. 4-hydroxyproline occurs at positions 55 and 65. The residue at position 67 (cysteine 67) is a Cysteine amide.

As to expression, expressed by the venom duct.

Its subcellular location is the secreted. Intracranially injection into mice does not elicit symptoms. This is Conotoxin mr3g from Conus marmoreus (Marble cone).